A 199-amino-acid chain; its full sequence is Interleukin-11 (199 aa).

A signal peptide spans 1-21 (MNCVCRLVLVVLSLWPDTAVA). The important for interaction with IL11RA and for the stimulation of cell proliferation stretch occupies residues 182 to 190 (HLTLDWAVR).

It belongs to the IL-6 superfamily. In terms of assembly, interacts with IL11RA to associate with IL6ST, giving rise to a multimeric signaling complex.

Its subcellular location is the secreted. Cytokine that stimulates the proliferation of hematopoietic stem cells and megakaryocyte progenitor cells and induces megakaryocyte maturation resulting in increased platelet production. Also promotes the proliferation of hepatocytes in response to liver damage. Binding to its receptor formed by IL6ST and IL11RA activates a signaling cascade that promotes cell proliferation. Signaling leads to the activation of intracellular protein kinases and the phosphorylation of STAT3. The interaction with the membrane-bound IL11RA and IL6ST stimulates 'classic signaling', whereas the binding of IL11 and soluble IL11RA to IL6ST stimulates 'trans-signaling'. This chain is Interleukin-11 (IL11), found in Macaca fascicularis (Crab-eating macaque).